Reading from the N-terminus, the 298-residue chain is Lipoyl synthase (298 aa).

Residues Cys-40, Cys-45, Cys-51, Cys-67, Cys-71, Cys-74, and Ser-280 each coordinate [4Fe-4S] cluster. Positions 53–269 (AVRRTATFMI…KEIAMQKGFS (217 aa)) constitute a Radical SAM core domain.

It belongs to the radical SAM superfamily. Lipoyl synthase family. The cofactor is [4Fe-4S] cluster.

It is found in the cytoplasm. The catalysed reaction is [[Fe-S] cluster scaffold protein carrying a second [4Fe-4S](2+) cluster] + N(6)-octanoyl-L-lysyl-[protein] + 2 oxidized [2Fe-2S]-[ferredoxin] + 2 S-adenosyl-L-methionine + 4 H(+) = [[Fe-S] cluster scaffold protein] + N(6)-[(R)-dihydrolipoyl]-L-lysyl-[protein] + 4 Fe(3+) + 2 hydrogen sulfide + 2 5'-deoxyadenosine + 2 L-methionine + 2 reduced [2Fe-2S]-[ferredoxin]. It functions in the pathway protein modification; protein lipoylation via endogenous pathway; protein N(6)-(lipoyl)lysine from octanoyl-[acyl-carrier-protein]. In terms of biological role, catalyzes the radical-mediated insertion of two sulfur atoms into the C-6 and C-8 positions of the octanoyl moiety bound to the lipoyl domains of lipoate-dependent enzymes, thereby converting the octanoylated domains into lipoylated derivatives. This Bacillus subtilis (strain 168) protein is Lipoyl synthase.